A 473-amino-acid chain; its full sequence is MAP kinase-activated protein kinase 5 (473 aa).

The 283-residue stretch at 22–304 folds into the Protein kinase domain; the sequence is INWTQKLGAG…IEGVLDHPWL (283 aa). Residues 28–36 and lysine 51 contribute to the ATP site; that span reads LGAGISGPV. Serine 115 is subject to Phosphoserine; by PKA. Aspartate 148 (proton acceptor) is an active-site residue. Threonine 182 bears the Phosphothreonine; by MAPK11, MAPK14, MAPK4, MAPK6 and PKA mark. 2 positions are modified to phosphoserine: serine 212 and serine 354. Residues 409-440 adopt a coiled-coil conformation; sequence ENEDEKLNEVMQEAWKYNRECKLLRDALQSFS.

This sequence belongs to the protein kinase superfamily. CAMK Ser/Thr protein kinase family. As to quaternary structure, interacts with SQSTM1. Interacts with ERK3/MAPK6 and ERK4/MAPK4 (via FRIEDE motif); the interaction is direct. Interacts with YWHAE; the interaction prevents phosphorylation of HSP27/HSPB1 leading to disrupt F-actin polymerization. Phosphorylated on Thr-182 ERK3/MAPK6 or ERK4/MAPK4; which is the regulatory phosphorylation site and is located on the T-loop/loop 12, leading to activation. Phosphorylation at Thr-182 by p38-alpha/MAPK14, p38-beta/MAPK11 is subject to debate. Phosphorylated at Ser-115 by PKA/PRKACA, leading to localization to the cytoplasm. Autophosphorylated. As to expression, expressed ubiquitously.

It is found in the cytoplasm. Its subcellular location is the nucleus. It catalyses the reaction L-seryl-[protein] + ATP = O-phospho-L-seryl-[protein] + ADP + H(+). The catalysed reaction is L-threonyl-[protein] + ATP = O-phospho-L-threonyl-[protein] + ADP + H(+). Activated following phosphorylation at Thr-182 by p38-alpha/MAPK14, p38-beta/MAPK11, ERK2/MAPK1, ERK3/MAPK6, and ERK4/MAPK4. Activated by stress-related extracellular stimuli; such as H(2)O(2), arsenite, anisomycin TNF alpha and also PMA and the calcium ionophore A23187; but to a lesser extent. In vitro, activated by SQSTM1. Inhibited by diterpenoid alkaloid noroxoaconitine. Functionally, tumor suppressor serine/threonine-protein kinase involved in mTORC1 signaling and post-transcriptional regulation. Phosphorylates FOXO3, ERK3/MAPK6, ERK4/MAPK4, HSP27/HSPB1, p53/TP53 and RHEB. Acts as a tumor suppressor by mediating Ras-induced senescence and phosphorylating p53/TP53. Involved in post-transcriptional regulation of MYC by mediating phosphorylation of FOXO3: phosphorylation of FOXO3 leads to promote nuclear localization of FOXO3, enabling expression of miR-34b and miR-34c, 2 post-transcriptional regulators of MYC that bind to the 3'UTR of MYC transcript and prevent MYC translation. Acts as a negative regulator of mTORC1 signaling by mediating phosphorylation and inhibition of RHEB. Part of the atypical MAPK signaling via its interaction with ERK3/MAPK6 or ERK4/MAPK4: the precise role of the complex formed with ERK3/MAPK6 or ERK4/MAPK4 is still unclear, but the complex follows a complex set of phosphorylation events: upon interaction with atypical MAPK (ERK3/MAPK6 or ERK4/MAPK4), ERK3/MAPK6 (or ERK4/MAPK4) is phosphorylated and then mediates phosphorylation and activation of MAPKAPK5, which in turn phosphorylates ERK3/MAPK6 (or ERK4/MAPK4). Mediates phosphorylation of HSP27/HSPB1 in response to PKA/PRKACA stimulation, inducing F-actin rearrangement. The polypeptide is MAP kinase-activated protein kinase 5 (Mapkapk5) (Mus musculus (Mouse)).